Consider the following 145-residue polypeptide: Neuropeptide-like protein 68 (145 aa).

Residues 1–15 (MLLVLLFSLFSVGFG) form the signal peptide. The interval 41 to 65 (SSSSEDDTPDFPSLRDKRGVDPMSI) is disordered.

The protein localises to the secreted. This chain is Neuropeptide-like protein 68, found in Caenorhabditis elegans.